Here is a 79-residue protein sequence, read N- to C-terminus: UPF0349 protein BCE_5075 (79 aa).

It belongs to the UPF0349 family.

In Bacillus cereus (strain ATCC 10987 / NRS 248), this protein is UPF0349 protein BCE_5075.